The sequence spans 628 residues: NUAK family SNF1-like kinase 2 (628 aa).

Position 1 is an N-acetylmethionine (Met-1). The Protein kinase domain occupies Tyr-53 to Val-303. Residues Leu-59–Val-67 and Lys-81 each bind ATP. Asp-175 (proton acceptor) is an active-site residue. Thr-208 is modified (phosphothreonine; by LKB1). Positions Lys-355–Gly-493 are disordered. Ser-435 carries the post-translational modification Phosphoserine. The segment covering Ser-457–Gly-469 has biased composition (low complexity). Phosphoserine is present on residues Ser-523, Ser-544, Ser-547, and Ser-573. The tract at residues Arg-531 to Arg-562 is disordered.

The protein belongs to the protein kinase superfamily. CAMK Ser/Thr protein kinase family. SNF1 subfamily. Mg(2+) is required as a cofactor. Post-translationally, phosphorylated at Thr-208 by STK11/LKB1 in complex with STE20-related adapter-alpha (STRADA) pseudo kinase and CAB39. Autophosphorylation is also possible at Thr-208.

The catalysed reaction is L-seryl-[protein] + ATP = O-phospho-L-seryl-[protein] + ADP + H(+). The enzyme catalyses L-threonyl-[protein] + ATP = O-phospho-L-threonyl-[protein] + ADP + H(+). Activated by phosphorylation on Thr-208. In terms of biological role, stress-activated kinase involved in tolerance to glucose starvation. Induces cell-cell detachment by increasing F-actin conversion to G-actin. Expression is induced by CD95 or TNF-alpha, via NF-kappa-B. Protects cells from CD95-mediated apoptosis and is required for the increased motility and invasiveness of CD95-activated tumor cells. Phosphorylates LATS1 and LATS2. Plays a key role in neural tube closure during embryonic development through LATS2 phosphorylation and regulation of the nuclear localization of YAP1 a critical downstream regulatory target in the Hippo signaling pathway. This chain is NUAK family SNF1-like kinase 2, found in Homo sapiens (Human).